Consider the following 161-residue polypeptide: 6,7-dimethyl-8-ribityllumazine synthase (161 aa).

5-amino-6-(D-ribitylamino)uracil-binding positions include tryptophan 25, 57 to 59 (AFE), and 80 to 82 (VVI). A (2S)-2-hydroxy-3-oxobutyl phosphate-binding site is contributed by 85–86 (GT). Residue histidine 88 is the Proton donor of the active site. Phenylalanine 113 serves as a coordination point for 5-amino-6-(D-ribitylamino)uracil. Arginine 127 is a (2S)-2-hydroxy-3-oxobutyl phosphate binding site.

Belongs to the DMRL synthase family.

It catalyses the reaction (2S)-2-hydroxy-3-oxobutyl phosphate + 5-amino-6-(D-ribitylamino)uracil = 6,7-dimethyl-8-(1-D-ribityl)lumazine + phosphate + 2 H2O + H(+). Its pathway is cofactor biosynthesis; riboflavin biosynthesis; riboflavin from 2-hydroxy-3-oxobutyl phosphate and 5-amino-6-(D-ribitylamino)uracil: step 1/2. Catalyzes the formation of 6,7-dimethyl-8-ribityllumazine by condensation of 5-amino-6-(D-ribitylamino)uracil with 3,4-dihydroxy-2-butanone 4-phosphate. This is the penultimate step in the biosynthesis of riboflavin. The polypeptide is 6,7-dimethyl-8-ribityllumazine synthase (Kineococcus radiotolerans (strain ATCC BAA-149 / DSM 14245 / SRS30216)).